Reading from the N-terminus, the 122-residue chain is Glycine cleavage system H protein (122 aa).

The Lipoyl-binding domain maps to 19–101 (VVTVGITNYA…EKEGWLWKMT (83 aa)). Residue Lys-60 is modified to N6-lipoyllysine.

The protein belongs to the GcvH family. The glycine cleavage system is composed of four proteins: P, T, L and H. It depends on (R)-lipoate as a cofactor.

Functionally, the glycine cleavage system catalyzes the degradation of glycine. The H protein shuttles the methylamine group of glycine from the P protein to the T protein. The protein is Glycine cleavage system H protein of Bartonella quintana (strain Toulouse) (Rochalimaea quintana).